A 317-amino-acid polypeptide reads, in one-letter code: Ribosomal protein L11 methyltransferase (317 aa).

Residues Thr158, Gly179, Asp201, and Asn244 each coordinate S-adenosyl-L-methionine.

This sequence belongs to the methyltransferase superfamily. PrmA family.

It is found in the cytoplasm. It catalyses the reaction L-lysyl-[protein] + 3 S-adenosyl-L-methionine = N(6),N(6),N(6)-trimethyl-L-lysyl-[protein] + 3 S-adenosyl-L-homocysteine + 3 H(+). Methylates ribosomal protein L11. The chain is Ribosomal protein L11 methyltransferase from Streptococcus thermophilus (strain CNRZ 1066).